The sequence spans 313 residues: Glutathione synthetase (313 aa).

One can recognise an ATP-grasp domain in the interval 125-309 (KLFVMDFTEL…IAAKIWDVIE (185 aa)). 151-207 (RAEHGAVVMKPLHGHGGAAVFRVLPQDINFGSLYDMFAVTFREPWVIQRFLPEVKHG) lines the ATP pocket. Mg(2+) is bound by residues Glu-280 and Asn-282.

This sequence belongs to the prokaryotic GSH synthase family. The cofactor is Mg(2+). Mn(2+) is required as a cofactor.

The catalysed reaction is gamma-L-glutamyl-L-cysteine + glycine + ATP = glutathione + ADP + phosphate + H(+). It participates in sulfur metabolism; glutathione biosynthesis; glutathione from L-cysteine and L-glutamate: step 2/2. This chain is Glutathione synthetase, found in Rhodopseudomonas palustris (strain ATCC BAA-98 / CGA009).